A 109-amino-acid polypeptide reads, in one-letter code: Phosphoribosyl-ATP pyrophosphatase (109 aa).

This sequence belongs to the PRA-PH family.

The protein resides in the cytoplasm. It carries out the reaction 1-(5-phospho-beta-D-ribosyl)-ATP + H2O = 1-(5-phospho-beta-D-ribosyl)-5'-AMP + diphosphate + H(+). It functions in the pathway amino-acid biosynthesis; L-histidine biosynthesis; L-histidine from 5-phospho-alpha-D-ribose 1-diphosphate: step 2/9. The sequence is that of Phosphoribosyl-ATP pyrophosphatase from Sphingopyxis alaskensis (strain DSM 13593 / LMG 18877 / RB2256) (Sphingomonas alaskensis).